The chain runs to 141 residues: Translation initiation factor 2 subunit beta (141 aa).

This sequence belongs to the eIF-2-beta/eIF-5 family. Heterotrimer composed of an alpha, a beta and a gamma chain.

Functionally, eIF-2 functions in the early steps of protein synthesis by forming a ternary complex with GTP and initiator tRNA. The sequence is that of Translation initiation factor 2 subunit beta from Thermofilum pendens (strain DSM 2475 / Hrk 5).